A 1954-amino-acid polypeptide reads, in one-letter code: Integrin beta-like protein C (1954 aa).

A signal peptide spans 1-20; sequence MNKLFYLFILIASLFILTDA. Residues 21-1883 lie on the Extracellular side of the membrane; that stretch reads SHFRFGTISW…TTTQTNDNKT (1863 aa). N-linked (GlcNAc...) asparagine glycosylation is found at asparagine 138 and asparagine 354. Positions 428 to 465 constitute an EGF-like domain; sequence YGENCVAVPPCVNGVPNSGINGDGKCLCSNGWTGADCS. Cystine bridges form between cysteine 438–cysteine 453 and cysteine 455–cysteine 464. Asparagine 479 carries an N-linked (GlcNAc...) asparagine glycan. A VWFA domain is found at 521-706; it reads DVYVLVDANL…TGVKNVLSKI (186 aa). 9 N-linked (GlcNAc...) asparagine glycosylation sites follow: asparagine 1348, asparagine 1382, asparagine 1628, asparagine 1678, asparagine 1742, asparagine 1770, asparagine 1820, asparagine 1860, and asparagine 1881. The chain crosses the membrane as a helical span at residues 1884-1904; it reads VLTGAIAGAAAGTALIAAAAW. The Cytoplasmic segment spans residues 1905–1954; sequence RLLRKAAPPTDTFFSEAAFLGDGVSSNPLYEQSASAAENPLYQSASDTTD.

This sequence belongs to the SIB family. As to quaternary structure, interacts with talA/talin.

It localises to the membrane. Implicated in cellular adhesion. This is Integrin beta-like protein C (sibC) from Dictyostelium discoideum (Social amoeba).